The chain runs to 169 residues: Peptide methionine sulfoxide reductase MsrA (169 aa).

Residue cysteine 10 is part of the active site.

The protein belongs to the MsrA Met sulfoxide reductase family.

It carries out the reaction L-methionyl-[protein] + [thioredoxin]-disulfide + H2O = L-methionyl-(S)-S-oxide-[protein] + [thioredoxin]-dithiol. The catalysed reaction is [thioredoxin]-disulfide + L-methionine + H2O = L-methionine (S)-S-oxide + [thioredoxin]-dithiol. Functionally, has an important function as a repair enzyme for proteins that have been inactivated by oxidation. Catalyzes the reversible oxidation-reduction of methionine sulfoxide in proteins to methionine. The protein is Peptide methionine sulfoxide reductase MsrA of Streptococcus equi subsp. zooepidemicus (strain MGCS10565).